Consider the following 132-residue polypeptide: Small ribosomal subunit protein uS8 (132 aa).

It belongs to the universal ribosomal protein uS8 family. As to quaternary structure, part of the 30S ribosomal subunit. Contacts proteins S5 and S12.

In terms of biological role, one of the primary rRNA binding proteins, it binds directly to 16S rRNA central domain where it helps coordinate assembly of the platform of the 30S subunit. This is Small ribosomal subunit protein uS8 from Halothermothrix orenii (strain H 168 / OCM 544 / DSM 9562).